Here is a 471-residue protein sequence, read N- to C-terminus: Ribulose bisphosphate carboxylase large chain (471 aa).

N6,N6,N6-trimethyllysine is present on Lys-5. The substrate site is built by Asn-114 and Thr-164. Lys-166 (proton acceptor) is an active-site residue. Lys-168 serves as a coordination point for substrate. Mg(2+) contacts are provided by Lys-192, Asp-194, and Glu-195. Lys-192 is subject to N6-carboxylysine. His-285 acts as the Proton acceptor in catalysis. The substrate site is built by Arg-286, His-318, and Ser-370.

It belongs to the RuBisCO large chain family. Type I subfamily. In terms of assembly, heterohexadecamer of 8 large chains and 8 small chains; disulfide-linked. The disulfide link is formed within the large subunit homodimers. Mg(2+) is required as a cofactor. Post-translationally, the disulfide bond which can form in the large chain dimeric partners within the hexadecamer appears to be associated with oxidative stress and protein turnover.

The protein localises to the plastid. The protein resides in the chloroplast. The catalysed reaction is 2 (2R)-3-phosphoglycerate + 2 H(+) = D-ribulose 1,5-bisphosphate + CO2 + H2O. It catalyses the reaction D-ribulose 1,5-bisphosphate + O2 = 2-phosphoglycolate + (2R)-3-phosphoglycerate + 2 H(+). Functionally, ruBisCO catalyzes two reactions: the carboxylation of D-ribulose 1,5-bisphosphate, the primary event in carbon dioxide fixation, as well as the oxidative fragmentation of the pentose substrate in the photorespiration process. Both reactions occur simultaneously and in competition at the same active site. The sequence is that of Ribulose bisphosphate carboxylase large chain from Schlumbergera truncata (Thanksgiving cactus).